The sequence spans 473 residues: MKSELIFLPAPAIGHLVGMVEMAKLFISRHENLSVTVLIAKFYMDTGVDNYNKSLLTNPTPRLTIVNLPETDPQNYMLKPRHAIFPSVIETQKTHVRDIISGMTQSESTRVVGLLADLLFINIMDIANEFNVPTYVYSPAGAGHLGLAFHLQTLNDKKQDVTEFRNSDTELLVPSFANPVPAEVLPSMYVDKEGGYDYLFSLFRRCRESKAIIINTFEELEPYAINSLRMDSMIPPIYPVGPILNLNGDGQNSDEAAVILGWLDDQPPSSVVFLCFGSYGSFQENQVKEIAMGLERSGHRFLWSLRPSIPKGETKLQLKYSNLKEILPVGFLDRTSCVGKVIGWAPQVAVLAHKAVGGFVSHCGWNSILESVWYDMSVATWPMYGEQQLNAFEMVKELGLAVEIEVDYRNEYNKTGFIVRADEIETKIKKLMMDEKNSEIRKKVKEMKEKSRVAMSENGSSYTSLAKLFEKIM.

The active-site Proton acceptor is the His15. Residue His15 participates in an anthocyanidin binding. Asp117 serves as the catalytic Charge relay. Positions 345, 347, 362, 365, 366, 367, and 370 each coordinate UDP-alpha-D-glucose. Gly385 is a binding site for an anthocyanidin. Residues Glu386 and Gln387 each contribute to the UDP-alpha-D-glucose site.

This sequence belongs to the UDP-glycosyltransferase family.

The catalysed reaction is (20S)-protopanaxadiol + UDP-alpha-D-glucose = (20S)-ginsenoside C-K + UDP + H(+). It participates in secondary metabolite biosynthesis; terpenoid biosynthesis. Functionally, component of the triterpene saponins (e.g. PPD-type ginsenosides or panaxosides) biosynthetic pathways. Glycosyltransferase that catalyzes the biosynthesis of compound K from protopanaxadiol (PPD). The protein is UDP-glycosyltransferase 71A27 of Panax ginseng (Korean ginseng).